The sequence spans 163 residues: Auxin-responsive protein IAA5 (163 aa).

An EAR-like (transcriptional repression) motif is present at residues 15-19; the sequence is LRLGL. The region spanning 74–160 is the PB1 domain; it reads SSYVKVSVDG…KRLRIMKRSC (87 aa).

This sequence belongs to the Aux/IAA family. Homodimers and heterodimers. Highly expressed in stems and flowers.

Its subcellular location is the nucleus. In terms of biological role, aux/IAA proteins are short-lived transcriptional factors that function as repressors of early auxin response genes at low auxin concentrations. Repression is thought to result from the interaction with auxin response factors (ARFs), proteins that bind to the auxin-responsive promoter element (AuxRE). Formation of heterodimers with ARF proteins may alter their ability to modulate early auxin response genes expression. The chain is Auxin-responsive protein IAA5 (IAA5) from Arabidopsis thaliana (Mouse-ear cress).